The chain runs to 321 residues: Probable arabinan endo-1,5-alpha-L-arabinosidase A (321 aa).

Residues 1–19 form the signal peptide; it reads MSASVFVVVASCLAALAHG. Asp34 serves as the catalytic Proton acceptor. Glu200 serves as the catalytic Proton donor.

It belongs to the glycosyl hydrolase 43 family.

Its subcellular location is the secreted. The catalysed reaction is Endohydrolysis of (1-&gt;5)-alpha-arabinofuranosidic linkages in (1-&gt;5)-arabinans.. The protein operates within glycan metabolism; L-arabinan degradation. In terms of biological role, endo-1,5-alpha-L-arabinanase involved in degradation of pectin. Its preferred substrate is linear 1,5-alpha-L-arabinan. This Aspergillus fumigatus (strain ATCC MYA-4609 / CBS 101355 / FGSC A1100 / Af293) (Neosartorya fumigata) protein is Probable arabinan endo-1,5-alpha-L-arabinosidase A (abnA).